A 24-amino-acid chain; its full sequence is Protein YsdE (24 aa).

This is Protein YsdE from Escherichia coli (strain K12).